The following is a 502-amino-acid chain: Peroxisomal catalase (502 aa).

Active-site residues include histidine 64 and asparagine 137. Tyrosine 347 contacts heme. Residues 500–502 (AKM) carry the Microbody targeting signal motif.

This sequence belongs to the catalase family. Heme serves as cofactor.

The protein resides in the peroxisome matrix. It catalyses the reaction 2 H2O2 = O2 + 2 H2O. Its function is as follows. Catalyzes the degradation of hydrogen peroxide (H(2)O(2)) generated by peroxisomal oxidases to water and oxygen, thereby protecting cells from the toxic effects of hydrogen peroxide. The sequence is that of Peroxisomal catalase from Toxoplasma gondii.